The following is a 399-amino-acid chain: CCA-adding enzyme (399 aa).

ATP is bound by residues Gly-32 and Arg-35. The CTP site is built by Gly-32 and Arg-35. Residues Asp-45 and Asp-47 each contribute to the Mg(2+) site. ATP is bound by residues Arg-116, Asp-159, Arg-162, Arg-165, and Arg-168. 5 residues coordinate CTP: Arg-116, Asp-159, Arg-162, Arg-165, and Arg-168.

The protein belongs to the tRNA nucleotidyltransferase/poly(A) polymerase family. Bacterial CCA-adding enzyme type 3 subfamily. Homodimer. It depends on Mg(2+) as a cofactor.

It catalyses the reaction a tRNA precursor + 2 CTP + ATP = a tRNA with a 3' CCA end + 3 diphosphate. The catalysed reaction is a tRNA with a 3' CCA end + 2 CTP + ATP = a tRNA with a 3' CCACCA end + 3 diphosphate. Functionally, catalyzes the addition and repair of the essential 3'-terminal CCA sequence in tRNAs without using a nucleic acid template. Adds these three nucleotides in the order of C, C, and A to the tRNA nucleotide-73, using CTP and ATP as substrates and producing inorganic pyrophosphate. tRNA 3'-terminal CCA addition is required both for tRNA processing and repair. Also involved in tRNA surveillance by mediating tandem CCA addition to generate a CCACCA at the 3' terminus of unstable tRNAs. While stable tRNAs receive only 3'-terminal CCA, unstable tRNAs are marked with CCACCA and rapidly degraded. The sequence is that of CCA-adding enzyme from Streptococcus pneumoniae serotype 4 (strain ATCC BAA-334 / TIGR4).